Consider the following 621-residue polypeptide: MSSVQLSRGDFHSIFTNKQRYDNPTGGVYQVYNTRKSDGANSNRKNLIMISDGIYHMKALLRNQAASKFQSMELQRGDIIRVIIAEPAIVRERKKYVLLVDDFELVQSRADMVNQTSTFLDNYFSEHPNETLKDEDITDSGNVANQTNASNAGVPDMLHSNSNLNANERKFANENPNSQKTRPIFAIEQLSPYQNVWTIKARVSYKGEIKTWHNQRGDGKLFNVNFLDTSGEIRATAFNDFATKFNEILQEGKVYYVSKAKLQPAKPQFTNLTHPYELNLDRDTVIEECFDESNVPKTHFNFIKLDAIQNQEVNSNVDVLGIIQTINPHFELTSRAGKKFDRRDITIVDDSGFSISVGLWNQQALDFNLPEGSVAAIKGVRVTDFGGKSLSMGFSSTLIPNPEIPEAYALKGWYDSKGRNANFITLKQEPGMGGQSAASLTKFIAQRITIARAQAENLGRSEKGDFFSVKAAISFLKVDNFAYPACSNENCNKKVLEQPDGTWRCEKCDTNNARPNWRYILTISIIDETNQLWLTLFDDQAKQLLGVDANTLMSLKEEDPNEFTKITQSIQMNEYDFRIRAREDTYNDQSRIRYTVANLHSLNYRAEADYLADELSKALLA.

S2 carries the post-translational modification N-acetylserine. At S178 the chain carries Phosphoserine; by ATM or ATR. Positions 197–284 form a DNA-binding region, OB; that stretch reads WTIKARVSYK…PYELNLDRDT (88 aa). Residues 486–508 form a C4-type zinc finger; the sequence is CSNENCNKKVLEQPDGTWRCEKC.

The protein belongs to the replication factor A protein 1 family. Component of the heterotrimeric canonical replication protein A complex (RPA). Interacts with POB3. In terms of processing, the N-terminus is blocked.

Its subcellular location is the nucleus. Functionally, as part of the replication protein A (RPA/RP-A), a single-stranded DNA-binding heterotrimeric complex, may play an essential role in DNA replication, recombination and repair. Binds and stabilizes single-stranded DNA intermediates, preventing complementary DNA reannealing and recruiting different proteins involved in DNA metabolism. Binds to single-stranded sequences participating in DNA replication in addition to those mediating transcriptional repression (URS1) and activation (CAR1). Stimulates the activity of a cognate strand exchange protein (SEP1). It cooperates with T-AG and DNA topoisomerase I to unwind template DNA containing the simian virus 40 origin of DNA replication. This is Replication factor A protein 1 (RFA1) from Saccharomyces cerevisiae (strain ATCC 204508 / S288c) (Baker's yeast).